The chain runs to 425 residues: MKRKLIAAIGIAGMMVSIAACGGDSDDDGKKAGADGYAGETLTVWVMDGSSPDDWQADLAKDFEAKTKAKVKFEIQKWNGIQQKLTTALSEENPPDVFEIGNTQTPAYAKTGGLADLSDLKGEIGTDWSESLNKSAVFDGKQYAAPWFVVNRVVVYNKKIWADAGIKELPKTRDEFYNDLKTIGEKTDAEPIYLPGQNWYHFVGLVIGEGGELVKKDGDKYVSNLADPKVAAATETYKKFQALSKAPKDKDEATPQQGEIFAKGKTGSFIGMGWEGATAIATNPAIEKDLGYFTIPGPTADKPEGVFLGGSNLAVAAGSKKQDLAKEFLKLALSDKYEGGLAKANGVIPNKEALQSNLKGNAAAEAAAPAAGTGDTTPLIPEWAAVENDPNPIKTYLTAVMKGKSPADAAKQVEGEFNKRLAQQQ.

A signal peptide spans Met1–Ala20. Cys21 carries the N-palmitoyl cysteine lipid modification. A lipid anchor (S-diacylglycerol cysteine) is attached at Cys21.

This sequence belongs to the bacterial solute-binding protein 1 family. In terms of assembly, the complex is composed of two ATP-binding proteins (MsiK), two transmembrane proteins (DasB and DasC) and a solute-binding protein (DasA).

Its subcellular location is the cell membrane. Its function is as follows. Part of the ABC transporter complex DasABC-MsiK involved in N,N'-diacetylchitobiose ((GlcNAc)2) uptake. Binds specifically to (GlcNAc)2. Can also bind to GlcNAc, (GlcNAc)3, (GlcNAc)4 and (GlcNAc)5, but it exhibits the highest affinity for (GlcNAc)2. Involved in the control of morphological differentiation. The chain is Diacetylchitobiose binding protein DasA from Streptomyces coelicolor (strain ATCC BAA-471 / A3(2) / M145).